The chain runs to 81 residues: Conotoxin Eb11.3 (81 aa).

An N-terminal signal peptide occupies residues 1–23; sequence MMFRLTSVWCLLVIVLLNSAVDG. Cystine bridges form between Cys27–Cys41, Cys34–Cys48, Cys40–Cys56, and Cys47–Cys62. Leu69 carries the leucine amide modification. Residues 73–81 constitute a propeptide that is removed on maturation; sequence AQYKRFFRR.

Belongs to the conotoxin I2 superfamily. As to expression, expressed by the venom duct.

Its subcellular location is the secreted. The chain is Conotoxin Eb11.3 from Conus eburneus (Ivory cone).